Reading from the N-terminus, the 85-residue chain is Large ribosomal subunit protein bL27 (85 aa).

The segment at M1 to L21 is disordered.

It belongs to the bacterial ribosomal protein bL27 family.

The polypeptide is Large ribosomal subunit protein bL27 (Photorhabdus laumondii subsp. laumondii (strain DSM 15139 / CIP 105565 / TT01) (Photorhabdus luminescens subsp. laumondii)).